The sequence spans 470 residues: Siroheme synthase (470 aa).

Residues 1–203 are precorrin-2 dehydrogenase /sirohydrochlorin ferrochelatase; it reads MDYLPIFVEL…GQIQQAEKQL (203 aa). NAD(+) is bound by residues 22 to 23 and 43 to 44; these read EV and PE. The residue at position 128 (S128) is a Phosphoserine. The segment at 214–470 is uroporphyrinogen-III C-methyltransferase; sequence GELALVGAGP…ISRPAVVDFA (257 aa). P223 is a binding site for S-adenosyl-L-methionine. D246 acts as the Proton acceptor in catalysis. The Proton donor role is filled by K268. Residues 299 to 301, I304, 329 to 330, M381, and G410 each bind S-adenosyl-L-methionine; these read GGD and TA.

The protein in the N-terminal section; belongs to the precorrin-2 dehydrogenase / sirohydrochlorin ferrochelatase family. It in the C-terminal section; belongs to the precorrin methyltransferase family.

It catalyses the reaction uroporphyrinogen III + 2 S-adenosyl-L-methionine = precorrin-2 + 2 S-adenosyl-L-homocysteine + H(+). The catalysed reaction is precorrin-2 + NAD(+) = sirohydrochlorin + NADH + 2 H(+). It carries out the reaction siroheme + 2 H(+) = sirohydrochlorin + Fe(2+). Its pathway is cofactor biosynthesis; adenosylcobalamin biosynthesis; precorrin-2 from uroporphyrinogen III: step 1/1. It participates in cofactor biosynthesis; adenosylcobalamin biosynthesis; sirohydrochlorin from precorrin-2: step 1/1. It functions in the pathway porphyrin-containing compound metabolism; siroheme biosynthesis; precorrin-2 from uroporphyrinogen III: step 1/1. The protein operates within porphyrin-containing compound metabolism; siroheme biosynthesis; siroheme from sirohydrochlorin: step 1/1. Its pathway is porphyrin-containing compound metabolism; siroheme biosynthesis; sirohydrochlorin from precorrin-2: step 1/1. Multifunctional enzyme that catalyzes the SAM-dependent methylations of uroporphyrinogen III at position C-2 and C-7 to form precorrin-2 via precorrin-1. Then it catalyzes the NAD-dependent ring dehydrogenation of precorrin-2 to yield sirohydrochlorin. Finally, it catalyzes the ferrochelation of sirohydrochlorin to yield siroheme. The protein is Siroheme synthase of Photorhabdus laumondii subsp. laumondii (strain DSM 15139 / CIP 105565 / TT01) (Photorhabdus luminescens subsp. laumondii).